The chain runs to 648 residues: Nucleoside triphosphatase I (648 aa).

Residues 48–213 (FIGLKNLNSM…NNLIGLLRPN (166 aa)) enclose the Helicase ATP-binding domain. ATP is bound at residue 61–68 (WDTGTGKT). The short motif at 151–154 (DEVH) is the DEXH box element. Positions 379–542 (YIEACRIILN…KINVVFDLLK (164 aa)) constitute a Helicase C-terminal domain. Residues 468–534 (DIIILDMPWN…DIIKNKQGKI (67 aa)) form a binding to the cap-specific mRNA (nucleoside-2'-O-)-methyltransferase region.

This sequence belongs to the helicase family. NPH I subfamily. Monomer. Interacts (via C-terminus) with RAP94 (via N-terminus). Interacts with the cap-specific mRNA (nucleoside-2'-O-)-methyltransferase.

Its subcellular location is the virion. It catalyses the reaction a ribonucleoside 5'-triphosphate + H2O = a ribonucleoside 5'-diphosphate + phosphate + H(+). DNA-dependent ATPase required for providing the needed energy to achieve the termination of early transcripts. Acts in concert with the RAP94 subunit of the virion RNA polymerase and the capping enzyme/VTF to catalyze release of UUUUUNU-containing nascent RNA from the elongation complex. NPH-I must bind ssDNA in order to exhibit ATPase activity. The chain is Nucleoside triphosphatase I (NPH1) from Choristoneura fumiferana (Spruce budworm moth).